The following is a 1174-amino-acid chain: Pesticidal crystal protein Cry1Fa (1174 aa).

Belongs to the delta endotoxin family.

In terms of biological role, promotes colloidosmotic lysis by binding to the midgut epithelial cells of many lepidopteran larvae. The sequence is that of Pesticidal crystal protein Cry1Fa (cry1Fa) from Bacillus thuringiensis subsp. aizawai.